Here is a 361-residue protein sequence, read N- to C-terminus: Phosphoserine aminotransferase (361 aa).

2 residues coordinate L-glutamate: S9 and R42. Residues A76–R77, W102, T153, D173, and Q196 contribute to the pyridoxal 5'-phosphate site. At K197 the chain carries N6-(pyridoxal phosphate)lysine. N238–T239 is a pyridoxal 5'-phosphate binding site.

Belongs to the class-V pyridoxal-phosphate-dependent aminotransferase family. SerC subfamily. Homodimer. Pyridoxal 5'-phosphate is required as a cofactor.

Its subcellular location is the cytoplasm. It catalyses the reaction O-phospho-L-serine + 2-oxoglutarate = 3-phosphooxypyruvate + L-glutamate. The catalysed reaction is 4-(phosphooxy)-L-threonine + 2-oxoglutarate = (R)-3-hydroxy-2-oxo-4-phosphooxybutanoate + L-glutamate. It functions in the pathway amino-acid biosynthesis; L-serine biosynthesis; L-serine from 3-phospho-D-glycerate: step 2/3. It participates in cofactor biosynthesis; pyridoxine 5'-phosphate biosynthesis; pyridoxine 5'-phosphate from D-erythrose 4-phosphate: step 3/5. Catalyzes the reversible conversion of 3-phosphohydroxypyruvate to phosphoserine and of 3-hydroxy-2-oxo-4-phosphonooxybutanoate to phosphohydroxythreonine. The chain is Phosphoserine aminotransferase from Erwinia tasmaniensis (strain DSM 17950 / CFBP 7177 / CIP 109463 / NCPPB 4357 / Et1/99).